A 131-amino-acid polypeptide reads, in one-letter code: D-ribose pyranase (131 aa).

The active-site Proton donor is H20. Substrate is bound by residues D28, H98, and 120–122; that span reads YSN.

The protein belongs to the RbsD / FucU family. RbsD subfamily. Homodecamer.

It is found in the cytoplasm. It catalyses the reaction beta-D-ribopyranose = beta-D-ribofuranose. The protein operates within carbohydrate metabolism; D-ribose degradation; D-ribose 5-phosphate from beta-D-ribopyranose: step 1/2. Catalyzes the interconversion of beta-pyran and beta-furan forms of D-ribose. The chain is D-ribose pyranase from Latilactobacillus sakei subsp. sakei (strain 23K) (Lactobacillus sakei subsp. sakei).